Reading from the N-terminus, the 333-residue chain is T-cell surface glycoprotein CD1c (333 aa).

An N-terminal signal peptide occupies residues 1 to 17 (MLFLQFLLLALLLPGGD). Residues 18–302 (NADASQEHVS…ILYWGHHFSM (285 aa)) are Extracellular-facing. N-linked (GlcNAc...) asparagine glycans are attached at residues N38, N70, N75, and N146. 2 disulfide bridges follow: C120–C185 and C225–C280. One can recognise an Ig-like domain in the interval 206–296 (PEAWLSSRPS…LGGQDIILYW (91 aa)). A helical transmembrane segment spans residues 303–323 (NWIALVVIVPLVILIVLVLWF). Residues 324 to 333 (KKHCSYQDIL) are Cytoplasmic-facing. An Internalization signal motif is present at residues 329–332 (YQDI).

Heterodimer with B2M (beta-2-microglobulin). In terms of tissue distribution, expressed on cortical thymocytes, on certain T-cell leukemias, and in various other tissues.

The protein resides in the cell membrane. It is found in the endosome membrane. It localises to the lysosome. Antigen-presenting protein that binds self and non-self lipid and glycolipid antigens and presents them to T-cell receptors on natural killer T-cells. This Homo sapiens (Human) protein is T-cell surface glycoprotein CD1c (CD1C).